A 291-amino-acid polypeptide reads, in one-letter code: Acetylglutamate kinase (291 aa).

Residues 64–65, R86, and N190 each bind substrate; that span reads GG.

The protein belongs to the acetylglutamate kinase family. ArgB subfamily.

The protein localises to the cytoplasm. The enzyme catalyses N-acetyl-L-glutamate + ATP = N-acetyl-L-glutamyl 5-phosphate + ADP. It functions in the pathway amino-acid biosynthesis; L-arginine biosynthesis; N(2)-acetyl-L-ornithine from L-glutamate: step 2/4. In terms of biological role, catalyzes the ATP-dependent phosphorylation of N-acetyl-L-glutamate. This Leptospira borgpetersenii serovar Hardjo-bovis (strain JB197) protein is Acetylglutamate kinase.